A 281-amino-acid chain; its full sequence is Lectin CaBo (281 aa).

Positions 1-29 are cleaved as a signal peptide; it reads MAISKKSSLYLPIFTFITMLLMVVNKVSS. Residue Asp-119 coordinates Ca(2+). Arg-139 is a binding site for a carbohydrate. The propeptide at 149-163 is removed in mature form; sequence IIKNSTTIDFNAAYN. Residues Glu-171 and Asp-173 each coordinate Mn(2+). Asp-173, Tyr-175, Asn-177, and Asp-182 together coordinate Ca(2+). Tyr-175 lines the a carbohydrate pocket. Mn(2+)-binding residues include Asp-182 and His-187. 262-263 is a binding site for a carbohydrate; the sequence is LY.

It belongs to the leguminous lectin family. Equilibrium between homodimer and homotetramer. The mature chain consists of residues 164-281 followed by residues 30-148. Concanavalin A-like lectins of the Diocleinae subtribe undergo proteolytic processing referred to as circular permutation. The propeptide is split into an N-terminal and a C-terminal part, the gamma and beta chain, respectively. These are then religated in beta-gamma order to form the mature alpha chain. The beta and gamma chains can often be detected in cell extracts.

Its function is as follows. D-mannose-specific lectin. In Canavalia bonariensis, this protein is Lectin CaBo.